Here is a 677-residue protein sequence, read N- to C-terminus: Methionine--tRNA ligase (677 aa).

The short motif at 15–25 (PYANGSIHLGH) is the 'HIGH' region element. 4 residues coordinate Zn(2+): Cys-146, Cys-149, Cys-159, and Cys-162. The short motif at 333 to 337 (KMSKS) is the 'KMSKS' region element. Lys-336 contacts ATP. A tRNA-binding domain is found at 575–677 (DFAKVDLRVA…AGAKPGHQVK (103 aa)).

The protein belongs to the class-I aminoacyl-tRNA synthetase family. MetG type 1 subfamily. As to quaternary structure, homodimer. Zn(2+) is required as a cofactor.

The protein resides in the cytoplasm. It carries out the reaction tRNA(Met) + L-methionine + ATP = L-methionyl-tRNA(Met) + AMP + diphosphate. In terms of biological role, is required not only for elongation of protein synthesis but also for the initiation of all mRNA translation through initiator tRNA(fMet) aminoacylation. This chain is Methionine--tRNA ligase, found in Escherichia coli (strain SE11).